Consider the following 477-residue polypeptide: Serine/threonine protein phosphatase 2A 55 kDa regulatory subunit B' delta isoform (477 aa).

Belongs to the phosphatase 2A regulatory subunit B56 family. PP2A consists of a common heteromeric enzyme, composed of a catalytic subunit (subunits C), a constant regulatory subunit (subunit A), and a variety of regulatory subunits such as subunits B (the R2/B/PR55/B55, R3/B''/PR72/PR130/PR59 and R5/B'/B56 families). Interacts with SRK2E/OST1. Expressed ubiquitously.

It is found in the cytoplasm. In terms of biological role, the B regulatory subunit may modulate substrate selectivity and catalytic activity, and may also direct the localization of the catalytic enzyme to a particular subcellular compartment. The polypeptide is Serine/threonine protein phosphatase 2A 55 kDa regulatory subunit B' delta isoform (B'DELTA) (Arabidopsis thaliana (Mouse-ear cress)).